The following is a 460-amino-acid chain: Chromosomal replication initiator protein DnaA (460 aa).

The domain I, interacts with DnaA modulators stretch occupies residues M1–A84. Residues A84 to S123 form a domain II region. Residues N124 to A340 are domain III, AAA+ region. ATP-binding residues include G168, G170, K171, and T172. The domain IV, binds dsDNA stretch occupies residues N341–S460.

The protein belongs to the DnaA family. As to quaternary structure, oligomerizes as a right-handed, spiral filament on DNA at oriC.

The protein localises to the cytoplasm. Plays an essential role in the initiation and regulation of chromosomal replication. ATP-DnaA binds to the origin of replication (oriC) to initiate formation of the DNA replication initiation complex once per cell cycle. Binds the DnaA box (a 9 base pair repeat at the origin) and separates the double-stranded (ds)DNA. Forms a right-handed helical filament on oriC DNA; dsDNA binds to the exterior of the filament while single-stranded (ss)DNA is stabiized in the filament's interior. The ATP-DnaA-oriC complex binds and stabilizes one strand of the AT-rich DNA unwinding element (DUE), permitting loading of DNA polymerase. After initiation quickly degrades to an ADP-DnaA complex that is not apt for DNA replication. Binds acidic phospholipids. The protein is Chromosomal replication initiator protein DnaA of Shewanella sp. (strain MR-7).